The sequence spans 368 residues: tRNA-specific 2-thiouridylase MnmA (368 aa).

ATP-binding positions include 11-18 and Met-37; that span reads GMSGGVDS. An interaction with target base in tRNA region spans residues 97–99; sequence NPD. Cys-102 serves as the catalytic Nucleophile. An intrachain disulfide couples Cys-102 to Cys-199. An ATP-binding site is contributed by Gly-127. Positions 149-151 are interaction with tRNA; it reads KDQ. Cys-199 (cysteine persulfide intermediate) is an active-site residue. Residues 311 to 312 form an interaction with tRNA region; that stretch reads RY.

It belongs to the MnmA/TRMU family. Interacts with TusE.

Its subcellular location is the cytoplasm. The catalysed reaction is S-sulfanyl-L-cysteinyl-[protein] + uridine(34) in tRNA + AH2 + ATP = 2-thiouridine(34) in tRNA + L-cysteinyl-[protein] + A + AMP + diphosphate + H(+). Catalyzes the 2-thiolation of uridine at the wobble position (U34) of tRNA(Lys), tRNA(Glu) and tRNA(Gln), leading to the formation of s(2)U34, the first step of tRNA-mnm(5)s(2)U34 synthesis. Sulfur is provided by IscS, via a sulfur-relay system. Binds ATP and its substrate tRNAs. The polypeptide is tRNA-specific 2-thiouridylase MnmA (Salmonella typhimurium (strain LT2 / SGSC1412 / ATCC 700720)).